The primary structure comprises 501 residues: Beta-secretase 1 (501 aa).

The N-terminal stretch at 1–21 (MAPALRWLLLWVGSGMLPAQG) is a signal peptide. Residues 22-45 (THLGIRLPLRSGLAGPPLGLRLPR) constitute a propeptide that is removed on maturation. At 22–457 (THLGIRLPLR…PQTDESTLMT (436 aa)) the chain is on the extracellular side. The Peptidase A1 domain occupies 75–416 (YYVEMTVGSP…DRARKRIGFA (342 aa)). Asp-93 is an active-site residue. Position 126 is an N6-acetyllysine (Lys-126). Residues Asn-153, Asn-172, and Asn-223 are each glycosylated (N-linked (GlcNAc...) asparagine). 3 cysteine pairs are disulfide-bonded: Cys-216-Cys-420, Cys-278-Cys-443, and Cys-330-Cys-380. 3 positions are modified to N6-acetyllysine: Lys-275, Lys-279, and Lys-285. The active site involves Asp-289. 3 positions are modified to N6-acetyllysine: Lys-299, Lys-300, and Lys-307. Asn-354 carries N-linked (GlcNAc...) asparagine glycosylation. A helical membrane pass occupies residues 458–478 (IAYVMAAICALFMLPLCLMVC). 4 S-palmitoyl cysteine lipidation sites follow: Cys-474, Cys-478, Cys-482, and Cys-485. The Cytoplasmic segment spans residues 479–501 (QWRCLRCLRHQHDDFADDISLLK). Positions 479–501 (QWRCLRCLRHQHDDFADDISLLK) are interaction with RTN3. The short motif at 496 to 500 (DISLL) is the DXXLL element. Ser-498 bears the Phosphoserine mark. A Glycyl lysine isopeptide (Lys-Gly) (interchain with G-Cter in ubiquitin) cross-link involves residue Lys-501.

Belongs to the peptidase A1 family. In terms of assembly, monomer. Interacts (via DXXLL motif) with GGA1, GGA2 and GGA3 (via their VHS domain); the interaction highly increases when BACE1 is phosphorylated at Ser-498. Interacts with RTN1; RTN2; RTN3 and RTN4; the interaction leads to inhibition of amyloid precursor protein processing. Interacts with SNX6. Interacts with PCSK9. Interacts with NAT8 and NAT8B. Interacts with BIN1. Interacts (via extracellular domain) with ADAM10 (via extracellular domain). Interacts with SORL1; this interaction may affect binding with APP and hence reduce APP cleavage. Interacts with NRDC AND NRG1. Palmitoylation mediates lipid raft localization. Post-translationally, acetylated in the endoplasmic reticulum at Lys-126, Lys-275, Lys-279, Lys-285, Lys-299, Lys-300 and Lys-307. Acetylation by NAT8 and NAT8B is transient and deacetylation probably occurs in the Golgi. Acetylation regulates the maturation, the transport to the plasma membrane, the stability and the expression of the protein. In terms of processing, ubiquitinated at Lys-501, ubiquitination leads to lysosomal degradation. Monoubiquitinated and 'Lys-63'-linked polyubitinated. Deubiquitnated by USP8; inhibits lysosomal degradation. Phosphorylation at Ser-498 is required for interaction with GGA1 and retrograded transport from endosomal compartments to the trans-Golgi network. Non-phosphorylated BACE1 enters a direct recycling route to the cell surface. Post-translationally, N-Glycosylated. Addition of a bisecting N-acetylglucosamine by MGAT3 blocks lysosomal targeting, further degradation and is required for maintaining stability under stress conditions.

It is found in the cell membrane. The protein resides in the golgi apparatus. The protein localises to the trans-Golgi network. Its subcellular location is the endoplasmic reticulum. It localises to the endosome. It is found in the cell surface. The protein resides in the cytoplasmic vesicle membrane. The protein localises to the membrane raft. Its subcellular location is the lysosome. It localises to the late endosome. It is found in the early endosome. The protein resides in the recycling endosome. The protein localises to the cell projection. Its subcellular location is the axon. It localises to the dendrite. The enzyme catalyses Broad endopeptidase specificity. Cleaves Glu-Val-Asn-Leu-|-Asp-Ala-Glu-Phe in the Swedish variant of Alzheimer's amyloid precursor protein.. Its activity is regulated as follows. Inhibited by RTN3 and RTN4. Responsible for the proteolytic processing of the amyloid precursor protein (APP). Cleaves at the N-terminus of the A-beta peptide sequence, between residues 671 and 672 of APP, leads to the generation and extracellular release of beta-cleaved soluble APP, and a corresponding cell-associated C-terminal fragment which is later released by gamma-secretase. Cleaves CHL1. The polypeptide is Beta-secretase 1 (Bace1) (Rattus norvegicus (Rat)).